A 971-amino-acid polypeptide reads, in one-letter code: Exportin-2 (971 aa).

The Importin N-terminal domain occupies alanine 29–serine 102.

This sequence belongs to the XPO2/CSE1 family. As to quaternary structure, interacts with cftr.

Its subcellular location is the cytoplasm. It is found in the nucleus. Its function is as follows. Export receptor for importin alpha. Mediates importin-alpha re-export from the nucleus to the cytoplasm after import substrates have been released into the nucleoplasm. Negatively regulates fluid secretion and plays a role in fluid homeostasis by down-regulating cftr activity. This chain is Exportin-2 (cse1l), found in Oreochromis niloticus (Nile tilapia).